The primary structure comprises 476 residues: tRNA(Ile)-lysidine synthase (476 aa).

30–35 (SGGPDS) serves as a coordination point for ATP.

The protein belongs to the tRNA(Ile)-lysidine synthase family.

It is found in the cytoplasm. The catalysed reaction is cytidine(34) in tRNA(Ile2) + L-lysine + ATP = lysidine(34) in tRNA(Ile2) + AMP + diphosphate + H(+). Its function is as follows. Ligates lysine onto the cytidine present at position 34 of the AUA codon-specific tRNA(Ile) that contains the anticodon CAU, in an ATP-dependent manner. Cytidine is converted to lysidine, thus changing the amino acid specificity of the tRNA from methionine to isoleucine. This chain is tRNA(Ile)-lysidine synthase, found in Bacillus cereus (strain ATCC 14579 / DSM 31 / CCUG 7414 / JCM 2152 / NBRC 15305 / NCIMB 9373 / NCTC 2599 / NRRL B-3711).